The sequence spans 293 residues: MRNFIIHILTGLSGSGKSTALDVFEDAGFYCVDNMPVALLPKFLEIPVNTASGISGLAFVMDLREPDFLATYPSVFNDLKAQGYRLTVLFFEAGENVLIQRYSQTRRHHPLAGDKGLVSGIRRERELLEELRASSDTVIDTSTLTIHELKIRLLARIRKSADHMPMRIHVMSFGYKYGIPHDADIIMDVRFLPNPYFVDPLKHKNGTDADVAAHVLNHSTGSAFLEKFLNLIDFLLPLYKNEPKAYLTVAVGCTGGCHRSVAVATAVFNHMKKREERHVEISHRDLKEAGQTT.

11-18 (GLSGSGKS) contributes to the ATP binding site. 62-65 (DLRE) provides a ligand contact to GTP.

The protein belongs to the RapZ-like family.

In terms of biological role, displays ATPase and GTPase activities. The polypeptide is Nucleotide-binding protein Dole_0503 (Desulfosudis oleivorans (strain DSM 6200 / JCM 39069 / Hxd3) (Desulfococcus oleovorans)).